Reading from the N-terminus, the 387-residue chain is MKQAVIVDCIRTPMGRSKAGVFRNVRAETLSAELMKALMVRNPQLDPNDIEDVIWGCVQQTLEQGFNIARNASLLAGIPKTAGAVTVNRLCGSSMDALHQAARAIMTGQGDTFIIGGVEHMGHVPMNHGVDFHPGLANRVAKASGMMGLTAEMLGKMHGITREQQDAFAVRSHQRAHAATIEGRFAKEIWGIEGHDANGALIKVMTDEVIRPETTLESLAGLRPAFDPVNGTVTAGTSSALSDGASAMLVMEESKARALGLTIRARIRSMAVAGCDAAIMGYGPVPATKKALARAGLSVADLDLIELNEAFAAQSLPCVKDLGLQDVVDEKINLNGGAIALGHPLGCSGARISTTLINLMEEKDATLGLATMCIGLGQGIATVFERV.

The active-site Acyl-thioester intermediate is the cysteine 91. Catalysis depends on proton acceptor residues histidine 343 and cysteine 373.

It belongs to the thiolase-like superfamily. Thiolase family. As to quaternary structure, heterotetramer of two alpha chains (FadB) and two beta chains (FadA).

It is found in the cytoplasm. It catalyses the reaction an acyl-CoA + acetyl-CoA = a 3-oxoacyl-CoA + CoA. Its pathway is lipid metabolism; fatty acid beta-oxidation. Functionally, catalyzes the final step of fatty acid oxidation in which acetyl-CoA is released and the CoA ester of a fatty acid two carbons shorter is formed. This Shewanella frigidimarina (strain NCIMB 400) protein is 3-ketoacyl-CoA thiolase.